The following is a 257-amino-acid chain: ADP-dependent (S)-NAD(P)H-hydrate dehydratase (257 aa).

One can recognise a YjeF C-terminal domain in the interval 1–257 (MGRLQRTLSN…VIERIPDTIR (257 aa)). Gly200 serves as a coordination point for AMP. A (6S)-NADPHX-binding site is contributed by Asp201.

This sequence belongs to the NnrD/CARKD family. In terms of assembly, homotetramer. It depends on Mg(2+) as a cofactor.

The enzyme catalyses (6S)-NADHX + ADP = AMP + phosphate + NADH + H(+). The catalysed reaction is (6S)-NADPHX + ADP = AMP + phosphate + NADPH + H(+). Its function is as follows. Catalyzes the dehydration of the S-form of NAD(P)HX at the expense of ADP, which is converted to AMP. Together with NAD(P)HX epimerase, which catalyzes the epimerization of the S- and R-forms, the enzyme allows the repair of both epimers of NAD(P)HX, a damaged form of NAD(P)H that is a result of enzymatic or heat-dependent hydration. This chain is ADP-dependent (S)-NAD(P)H-hydrate dehydratase, found in Haloterrigena turkmenica (strain ATCC 51198 / DSM 5511 / JCM 9101 / NCIMB 13204 / VKM B-1734 / 4k) (Halococcus turkmenicus).